The following is a 319-amino-acid chain: Thioredoxin reductase (319 aa).

36–43 (TGINKGGQ) lines the FAD pocket. A disulfide bridge links Cys136 with Cys139. Residue 288–297 (DVIDHVYRQA) coordinates FAD.

The protein belongs to the class-II pyridine nucleotide-disulfide oxidoreductase family. As to quaternary structure, homodimer. FAD is required as a cofactor.

The protein resides in the cytoplasm. It carries out the reaction [thioredoxin]-dithiol + NADP(+) = [thioredoxin]-disulfide + NADPH + H(+). The sequence is that of Thioredoxin reductase (trxB) from Buchnera aphidicola subsp. Schizaphis graminum (strain Sg).